Here is a 150-residue protein sequence, read N- to C-terminus: Large ribosomal subunit protein uL15 (150 aa).

The span at 1-15 (MNLSNLQPAEGSTHN) shows a compositional bias: polar residues. The tract at residues 1–53 (MNLSNLQPAEGSTHNQNKRVGRGEGSGKGGTAARGHKGAKSRSGYSKKIGFEG) is disordered. Gly residues predominate over residues 23 to 32 (GEGSGKGGTA).

Belongs to the universal ribosomal protein uL15 family. In terms of assembly, part of the 50S ribosomal subunit.

Binds to the 23S rRNA. The protein is Large ribosomal subunit protein uL15 of Flavobacterium johnsoniae (strain ATCC 17061 / DSM 2064 / JCM 8514 / BCRC 14874 / CCUG 350202 / NBRC 14942 / NCIMB 11054 / UW101) (Cytophaga johnsonae).